A 302-amino-acid polypeptide reads, in one-letter code: Deoxyribonuclease-1-like 1 (302 aa).

Positions 1–18 (MHYPTALLFLILANGAQA) are cleaved as a signal peptide. Residues Glu-97 and His-148 contribute to the active site. A disulfide bridge links Cys-187 with Cys-224. The N-linked (GlcNAc...) asparagine glycan is linked to Asn-261.

It belongs to the DNase I family. In terms of tissue distribution, highest levels in skeletal and cardiac muscles. Detectable in all other tissues tested except brain.

Its subcellular location is the endoplasmic reticulum. The chain is Deoxyribonuclease-1-like 1 (DNASE1L1) from Homo sapiens (Human).